Consider the following 313-residue polypeptide: Olfactory receptor 5H1 (313 aa).

Over 1 to 28 (MEEENATLLTEFVLTGFLYQPQWKIPLF) the chain is Extracellular. N-linked (GlcNAc...) asparagine glycosylation is present at Asn-5. A helical membrane pass occupies residues 29–49 (LAFLVIYLITIMGNLGLIAVI). Topologically, residues 50–56 (WKDPHLH) are cytoplasmic. Residues 57–77 (IPMYLLLGNLAFVDAWISSTV) traverse the membrane as a helical segment. The Extracellular portion of the chain corresponds to 78–98 (TPKMLNNFLAKSKMISLSECK). Cys-97 and Cys-179 are oxidised to a cystine. A helical transmembrane segment spans residues 99–119 (IQFFSFAISVTTECFLLATMA). The Cytoplasmic portion of the chain corresponds to 120-143 (YDRYVAICKPLLYPAIMTNGLCIR). The chain crosses the membrane as a helical span at residues 144–164 (LLILSYVGGILHALIHEGFLF). Residues 165-195 (RLTFCNSNIVHHIYCDTIPLSKISCTDSSIN) lie on the Extracellular side of the membrane. A helical transmembrane segment spans residues 196 to 216 (FLMVFIFSGSIQVFSIVTILV). Residues 217–240 (SYTFVLFAILKKKSDKGVRKAFST) lie on the Cytoplasmic side of the membrane. A helical membrane pass occupies residues 241-261 (CGAHLFSVSLYYGPLLFIYVG). The Extracellular portion of the chain corresponds to 262–271 (PASPQADDQD). The chain crosses the membrane as a helical span at residues 272 to 292 (MVEPLFYTVIIPLLNPIIYSL). The Cytoplasmic segment spans residues 293 to 313 (RNKQVTVSFTKMLKKHVKVSY).

Belongs to the G-protein coupled receptor 1 family.

Its subcellular location is the cell membrane. Functionally, odorant receptor. This is Olfactory receptor 5H1 (OR5H1) from Homo sapiens (Human).